We begin with the raw amino-acid sequence, 339 residues long: Methylthioribose-1-phosphate isomerase (339 aa).

Residues 49–51 (RGA), R86, and Q187 each bind substrate. D228 acts as the Proton donor in catalysis. 238 to 239 (NK) serves as a coordination point for substrate.

Belongs to the eIF-2B alpha/beta/delta subunits family. MtnA subfamily.

It carries out the reaction 5-(methylsulfanyl)-alpha-D-ribose 1-phosphate = 5-(methylsulfanyl)-D-ribulose 1-phosphate. Its pathway is amino-acid biosynthesis; L-methionine biosynthesis via salvage pathway; L-methionine from S-methyl-5-thio-alpha-D-ribose 1-phosphate: step 1/6. In terms of biological role, catalyzes the interconversion of methylthioribose-1-phosphate (MTR-1-P) into methylthioribulose-1-phosphate (MTRu-1-P). The sequence is that of Methylthioribose-1-phosphate isomerase from Cronobacter sakazakii (strain ATCC BAA-894) (Enterobacter sakazakii).